The chain runs to 100 residues: NADH-quinone oxidoreductase subunit K (100 aa).

The next 3 membrane-spanning stretches (helical) occupy residues 4 to 24, 28 to 48, and 60 to 80; these read TTWVIILSFLLFAIGTFGLLS, LLFILLSLEIMLNGIILLFIA, and IMYLLVLTLAASEVAVGLALV.

This sequence belongs to the complex I subunit 4L family. As to quaternary structure, NDH-1 is composed of 13 different subunits. Subunits NuoA, H, J, K, L, M, N constitute the membrane sector of the complex.

The protein localises to the cell inner membrane. The enzyme catalyses a quinone + NADH + 5 H(+)(in) = a quinol + NAD(+) + 4 H(+)(out). Its function is as follows. NDH-1 shuttles electrons from NADH, via FMN and iron-sulfur (Fe-S) centers, to quinones in the respiratory chain. The immediate electron acceptor for the enzyme in this species is believed to be ubiquinone. Couples the redox reaction to proton translocation (for every two electrons transferred, four hydrogen ions are translocated across the cytoplasmic membrane), and thus conserves the redox energy in a proton gradient. The polypeptide is NADH-quinone oxidoreductase subunit K (Shewanella woodyi (strain ATCC 51908 / MS32)).